We begin with the raw amino-acid sequence, 84 residues long: Cell division topological specificity factor (84 aa).

It belongs to the MinE family.

Prevents the cell division inhibition by proteins MinC and MinD at internal division sites while permitting inhibition at polar sites. This ensures cell division at the proper site by restricting the formation of a division septum at the midpoint of the long axis of the cell. The chain is Cell division topological specificity factor from Paraburkholderia phytofirmans (strain DSM 17436 / LMG 22146 / PsJN) (Burkholderia phytofirmans).